Reading from the N-terminus, the 173-residue chain is Photosystem I assembly protein Ycf3 (173 aa).

3 TPR repeats span residues 35–68, 72–105, and 120–153; these read AYIY…EENK, GETL…NPKQ, and GRNA…YPGG.

This sequence belongs to the Ycf3 family.

The protein resides in the cellular thylakoid membrane. Functionally, essential for the assembly of the photosystem I (PSI) complex. May act as a chaperone-like factor to guide the assembly of the PSI subunits. This chain is Photosystem I assembly protein Ycf3, found in Prochlorococcus marinus (strain MIT 9312).